The chain runs to 22 residues: Mu-conotoxin GIIIB (22 aa).

Cystine bridges form between Cys-3–Cys-15, Cys-4–Cys-20, and Cys-10–Cys-21. 4-hydroxyproline; partial is present on residues Pro-6 and Pro-7. Pro-17 is modified (4-hydroxyproline). At Ala-22 the chain carries Alanine amide.

It belongs to the conotoxin M superfamily. As to expression, expressed by the venom duct.

The protein resides in the secreted. Its function is as follows. Mu-conotoxins block voltage-gated sodium channels (Nav). The polypeptide is Mu-conotoxin GIIIB (Conus geographus (Geography cone)).